The sequence spans 367 residues: MTSRNYLLLTPGPLTTSRTVKEAMLFDSCTWDDDYNIGVVEQIRQQLTELATASEGYTSVLLQGSGSYAVEAVLGSALGPQDKVLIVSNGAYGARMVEMAGLMGIAHHAYDCGEVARPDVQAIDAILNADPTISHIAMVHSETTTGMLNPIDEVGTLAHRYGKTYIVDAMSSFGGIPMDIAALHIDYLISSANKCIQGVPGFAFVIAREQKLAACKGRSRSLSLDLYAQWRCMEDNHGKWRFTSPTHTVLAFAQALKELAKEGGVAARHQRYQQNQRSLVAGMRALGFNTLLDDELHSPIITAFYSPEDPQYRFSEFYRRLKEQGFVIYPGKVSQSDCFRIGNIGEVYAADITALLTAIRTAMYWTK.

The residue at position 194 (Lys194) is an N6-(pyridoxal phosphate)lysine.

The protein belongs to the class-V pyridoxal-phosphate-dependent aminotransferase family. PhnW subfamily. Homodimer. It depends on pyridoxal 5'-phosphate as a cofactor.

It carries out the reaction (2-aminoethyl)phosphonate + pyruvate = phosphonoacetaldehyde + L-alanine. Its function is as follows. Involved in phosphonate degradation. This is 2-aminoethylphosphonate--pyruvate transaminase from Salmonella dublin (strain CT_02021853).